A 4062-amino-acid chain; its full sequence is Transcription-associated protein 1 (4062 aa).

Residues 531-562 (LASEPSTSEDADESGGDPNKLPPPTKEGKKTS) form a disordered region. 2 TPR repeats span residues 1346 to 1379 (LDGV…LLDI) and 1677 to 1714 (RRSF…DDEE). Residues 2659-2670 (VETEMKREEPEP) show a composition bias toward basic and acidic residues. Residues 2659–2692 (VETEMKREEPEPMEVDEKDSQDDSKDAGEPKEKE) form a disordered region. Acidic residues predominate over residues 2671-2680 (MEVDEKDSQD). The span at 2681–2692 (DSKDAGEPKEKE) shows a compositional bias: basic and acidic residues. An FAT domain is found at 2800-3411 (LIEFISSKHE…FYHIREAVSV (612 aa)). The stretch at 2847-2880 (IETLESLGTLYNEISEFDQFAAIWERRAVFPDTM) is one TPR 3 repeat. Residues 3682 to 4046 (EPNFEIVIKG…DCVSLISRAK (365 aa)) form the PI3K/PI4K catalytic domain. The tract at residues 3688 to 3694 (VIKGGQV) is G-loop. Residues 3902-3910 (NLTPMGPDQ) are catalytic loop. An activation loop region spans residues 3922–3950 (NPSYRFEIRGGRSLHDIQHFGHEVPFRLT). The 32-residue stretch at 4031 to 4062 (AKLRKDDCVSLISRAKDSDNLARMPPTYHAWF) folds into the FATC domain.

This sequence belongs to the PI3/PI4-kinase family. TRA1 subfamily. In terms of assembly, interacts with histone acetyltransferase Tip60 homolog mys-1. Probably a component of a complex with histone acetyltransferase (HAT) activity, at least composed of mys-1 and trr-1. Expressed in germ cells and somatic cells.

It is found in the nucleus. Its subcellular location is the chromosome. In terms of biological role, influences germ cell fate in hermaphrodites. Acts downstream of tra-2 and tra-3 and through the Tip60 histone acetyltransferase complex to regulate germ cell fate decisions. Required for spermatogenesis and embryonic development. Acts with tra-2 to promote expression of fog-3 and control male tail development. Involved in the negative regulation of vulval development. Involved in the positive regulation of transcription factor daf-16, probably acting by histone acetylation; thereby modulating stress resistance. Plays a role in acetylation of nucleosomal histone H4, probably acting as a component of the Tip60 histone acetyltransferase complex. In Caenorhabditis elegans, this protein is Transcription-associated protein 1.